Reading from the N-terminus, the 230-residue chain is Geranylgeranylglyceryl phosphate synthase (230 aa).

Residue lysine 13 participates in sn-glycerol 1-phosphate binding. Residues aspartate 15 and threonine 41 each contribute to the Mg(2+) site. Residues 161 to 166 (YIEYSG), glycine 191, and 211 to 212 (GN) each bind sn-glycerol 1-phosphate.

It belongs to the GGGP/HepGP synthase family. Group I subfamily. The cofactor is Mg(2+).

The protein localises to the cytoplasm. The catalysed reaction is sn-glycerol 1-phosphate + (2E,6E,10E)-geranylgeranyl diphosphate = sn-3-O-(geranylgeranyl)glycerol 1-phosphate + diphosphate. It participates in membrane lipid metabolism; glycerophospholipid metabolism. In terms of biological role, prenyltransferase that catalyzes the transfer of the geranylgeranyl moiety of geranylgeranyl diphosphate (GGPP) to the C3 hydroxyl of sn-glycerol-1-phosphate (G1P). This reaction is the first ether-bond-formation step in the biosynthesis of archaeal membrane lipids. This chain is Geranylgeranylglyceryl phosphate synthase, found in Methanoculleus marisnigri (strain ATCC 35101 / DSM 1498 / JR1).